A 131-amino-acid chain; its full sequence is MVKIGARELAAVAIGGALGAVCRYLLSGLVPQVRGFPMGTVLVNVLGSFVLGFLTWSTMLGLRLSPEVRALATVGFCGGLTTLSTMAYETVELLKASPVLSILYLTANVVLGIAAVLGGMAAAHVVWSGRA.

4 helical membrane passes run 10–30 (AAVA…SGLV), 36–56 (FPMG…FLTW), 71–91 (LATV…YETV), and 99–119 (VLSI…VLGG). 2 residues coordinate Na(+): Gly-78 and Thr-81.

Belongs to the fluoride channel Fluc/FEX (TC 1.A.43) family.

The protein resides in the cell membrane. It catalyses the reaction fluoride(in) = fluoride(out). Na(+) is not transported, but it plays an essential structural role and its presence is essential for fluoride channel function. Its function is as follows. Fluoride-specific ion channel. Important for reducing fluoride concentration in the cell, thus reducing its toxicity. The chain is Fluoride-specific ion channel FluC from Methanopyrus kandleri (strain AV19 / DSM 6324 / JCM 9639 / NBRC 100938).